A 411-amino-acid polypeptide reads, in one-letter code: NADH-quinone oxidoreductase subunit H (411 aa).

Helical transmembrane passes span 18–38, 84–104, 124–144, 165–185, 198–218, 260–280, 288–308, 321–341, and 352–372; these read LAKSLGIFAFLLLTVLAAILI, WIYLAAPIISVIPAFMAFAVI, LPVAVLYILAVTSIGVYGIVL, VISYEIAMALSFAAVFIYAGT, TWYIVLLLPSFLVYVTAMVGE, VSALATTLFLGGWHAPWPISI, WWPLLWFTVKVWLFLFFFMWL, MALGWKILIPVSLGWIMIVAI, and APATAAIGLAVAAVILLALLG.

This sequence belongs to the complex I subunit 1 family. As to quaternary structure, NDH-1 is composed of 14 different subunits. Subunits NuoA, H, J, K, L, M, N constitute the membrane sector of the complex.

The protein localises to the cell membrane. It catalyses the reaction a quinone + NADH + 5 H(+)(in) = a quinol + NAD(+) + 4 H(+)(out). NDH-1 shuttles electrons from NADH, via FMN and iron-sulfur (Fe-S) centers, to quinones in the respiratory chain. The immediate electron acceptor for the enzyme in this species is believed to be menaquinone. Couples the redox reaction to proton translocation (for every two electrons transferred, four hydrogen ions are translocated across the cytoplasmic membrane), and thus conserves the redox energy in a proton gradient. This subunit may bind ubiquinone. The chain is NADH-quinone oxidoreductase subunit H from Mycolicibacterium vanbaalenii (strain DSM 7251 / JCM 13017 / BCRC 16820 / KCTC 9966 / NRRL B-24157 / PYR-1) (Mycobacterium vanbaalenii).